A 210-amino-acid chain; its full sequence is Large ribosomal subunit protein uL3 (210 aa).

This sequence belongs to the universal ribosomal protein uL3 family. As to quaternary structure, part of the 50S ribosomal subunit. Forms a cluster with proteins L14 and L19.

In terms of biological role, one of the primary rRNA binding proteins, it binds directly near the 3'-end of the 23S rRNA, where it nucleates assembly of the 50S subunit. The chain is Large ribosomal subunit protein uL3 from Pseudothermotoga lettingae (strain ATCC BAA-301 / DSM 14385 / NBRC 107922 / TMO) (Thermotoga lettingae).